A 31-amino-acid polypeptide reads, in one-letter code: MSDIN-like toxin proprotein 8 (31 aa).

The propeptide occupies 1 to 10; it reads MSDINTARLP. Residues 11–18 constitute a cross-link (cyclopeptide (Cys-Pro)); it reads CIGFLGIP. Positions 19-31 are excised as a propeptide; it reads SVGDDIEMVLRHG.

The protein belongs to the MSDIN fungal toxin family. Processed by the macrocyclase-peptidase enzyme POPB to yield a toxic cyclic octapeptide. POPB first removes 10 residues from the N-terminus. Conformational trapping of the remaining peptide forces the enzyme to release this intermediate rather than proceed to macrocyclization. The enzyme rebinds the remaining peptide in a different conformation and catalyzes macrocyclization of the N-terminal 8 residues.

Its function is as follows. Probable toxin that belongs to the MSDIN-like toxin family responsible for a large number of food poisoning cases and deaths. In Amanita bisporigera (Destroying angel), this protein is MSDIN-like toxin proprotein 8.